Here is a 200-residue protein sequence, read N- to C-terminus: Serine/threonine-protein kinase mos (200 aa).

Positions 2-200 (LCLLQPLGSG…ELLKGERVTA (199 aa)) constitute a Protein kinase domain. ATP-binding positions include 8–16 (LGSGGFGSV) and lysine 29. The Proton acceptor role is filled by aspartate 143.

The protein belongs to the protein kinase superfamily. Ser/Thr protein kinase family.

The enzyme catalyses L-seryl-[protein] + ATP = O-phospho-L-seryl-[protein] + ADP + H(+). The catalysed reaction is L-threonyl-[protein] + ATP = O-phospho-L-threonyl-[protein] + ADP + H(+). This is Serine/threonine-protein kinase mos (MOS) from Ciconia nigra (Black stork).